We begin with the raw amino-acid sequence, 379 residues long: UPF0450 protein C17orf58 homolog (379 aa).

The signal sequence occupies residues 1 to 17 (MIPALTVPLLFLCATSA). 2 disordered regions span residues 76-95 (RTRATHPQRQGQDLALPDKT) and 162-194 (TASQNLQGRKYSRNNDYGSMDHESNRPGKMNPH). A compositionally biased stretch (basic and acidic residues) spans 180 to 194 (SMDHESNRPGKMNPH). 3 cysteine pairs are disulfide-bonded: Cys234-Cys308, Cys238-Cys312, and Cys249-Cys378. One can recognise an NTR domain in the interval 234 to 378 (CIAECHRDKD…KVLAAAHSKC (145 aa)).

This sequence belongs to the UPF0450 family.

The chain is UPF0450 protein C17orf58 homolog from Xenopus laevis (African clawed frog).